The following is a 336-amino-acid chain: Tetraacyldisaccharide 4'-kinase (336 aa).

Position 60 to 67 (threonine 60 to threonine 67) interacts with ATP.

Belongs to the LpxK family.

It catalyses the reaction a lipid A disaccharide + ATP = a lipid IVA + ADP + H(+). The protein operates within glycolipid biosynthesis; lipid IV(A) biosynthesis; lipid IV(A) from (3R)-3-hydroxytetradecanoyl-[acyl-carrier-protein] and UDP-N-acetyl-alpha-D-glucosamine: step 6/6. Transfers the gamma-phosphate of ATP to the 4'-position of a tetraacyldisaccharide 1-phosphate intermediate (termed DS-1-P) to form tetraacyldisaccharide 1,4'-bis-phosphate (lipid IVA). The sequence is that of Tetraacyldisaccharide 4'-kinase from Pseudomonas entomophila (strain L48).